A 356-amino-acid chain; its full sequence is Calcium/calmodulin-dependent protein kinase type 1 (356 aa).

The Nuclear localization signal motif lies at 2–7 (PLFKRR). The 257-residue stretch at 22-278 (YDFRDVLGTG…CQSALEHPWI (257 aa)) folds into the Protein kinase domain. ATP-binding positions include 28-36 (LGTGAFSKV) and Lys-52. Catalysis depends on Asp-144, which acts as the Proton acceptor. Thr-179 is subject to Phosphothreonine; by ckk-1. An autoinhibitory domain region spans residues 278 to 318 (ISGNTAYTHDIHRTVAVHLKKSLAKRNWKKAFNAAAAIRQL). The tract at residues 298-319 (KSLAKRNWKKAFNAAAAIRQLQ) is calmodulin-binding.

Belongs to the protein kinase superfamily. CAMK Ser/Thr protein kinase family. CaMK subfamily. It depends on Mg(2+) as a cofactor.

Its subcellular location is the nucleus. The protein localises to the cytoplasm. It carries out the reaction L-seryl-[protein] + ATP = O-phospho-L-seryl-[protein] + ADP + H(+). The catalysed reaction is L-threonyl-[protein] + ATP = O-phospho-L-threonyl-[protein] + ADP + H(+). Activated by Ca(2+)/calmodulin. Binding of calmodulin results in a conformational change that generates functional binding sites for both substrate and ATP, and thus relieves autoinhibition and lowers the Km of substrate binding. Must be phosphorylated by ckk-1 to be maximally active but this does not appear to be required for activity in AFD neurons. Calcium/calmodulin-dependent protein kinase that operates in the calcium-triggered CaMKK-CaMK1 signaling cascade which results in transcriptional activation. Transcriptional activation occurs at least in part through phosphorylation of crh-1. Regulates gene expression, sensory morphology, and function of the AFD thermosensory neurons. Involved in long-term adaptation of AFD neurons to temperatures warmer than the initial acclimatized cultivation temperature. Acts in the FLP thermal nociceptors to moderate the responsiveness to noxious heat and controls neuropeptide release from FLP neurons in response to temperature elevations. Regulates the dauer decision, the decision of the larvae to enter into the alternative stress-resistant and long-lived dauer developmental stage, based on the feeding state, primarily in the AWC sensory neurons. Acts non cell-autonomously in the AWC neurons to regulate expression of the daf-28 insulin-like peptide and cell-autonomously in the ASI sensory neurons to regulate expression of the growth promoting daf-7 in a food-regulated manner. Plays a role in memory-based thermal response of an individual AFD neuron cell. Involved in chemotaxis response in AWC neurons to attractant 2-heptanone, a volatile organic compound emitted by the nematode pathogenic bacterium B.nematocida B16. Represses transcription of glutamate receptor glr-1 in the nucleus basally and in response to change in synaptic activity. The protein is Calcium/calmodulin-dependent protein kinase type 1 (cmk-1) of Caenorhabditis briggsae.